Consider the following 499-residue polypeptide: Pleckstrin homology domain-containing family O member 2 (499 aa).

Residues 1 to 11 show a composition bias toward basic and acidic residues; sequence MEEEGVKEGGQ. Positions 1–21 are disordered; it reads MEEEGVKEGGQRPRSAQTADK. Residues 18–119 enclose the PH domain; the sequence is TADKAGWIKK…WIKALNEGIN (102 aa). Ser167 carries the post-translational modification Phosphoserine. The tract at residues 170–419 is disordered; sequence LSRLDLDVPD…RRRQPGEQLH (250 aa). A compositionally biased stretch (pro residues) spans 201 to 212; it reads RPPMPPAKPSPA. Residues 229 to 238 are compositionally biased toward low complexity; the sequence is SAPAPVPASS. A phosphoserine mark is found at Ser237 and Ser238. Residues 246–258 are compositionally biased toward acidic residues; that stretch reads EDLETPVVEDSDS. At Ser273 the chain carries Phosphoserine. 2 positions are modified to phosphothreonine: Thr298 and Thr311. 2 stretches are compositionally biased toward low complexity: residues 329-349 and 367-386; these read EASGPAQSPGASEASAPGPAE and AAGPPGTPPKAATTSTTLPP. The residue at position 399 (Ser399) is a Phosphoserine. Positions 416–492 form a coiled coil; it reads EQLHRAQLEV…LREKRRELVT (77 aa).

The protein is Pleckstrin homology domain-containing family O member 2 (PLEKHO2) of Bos taurus (Bovine).